Consider the following 167-residue polypeptide: NAD(P)H-quinone oxidoreductase subunit I, chloroplastic (167 aa).

2 consecutive 4Fe-4S ferredoxin-type domains span residues 55–84 (GRIH…VDWK) and 95–124 (LNYS…MTEE). 8 residues coordinate [4Fe-4S] cluster: Cys64, Cys67, Cys70, Cys74, Cys104, Cys107, Cys110, and Cys114.

It belongs to the complex I 23 kDa subunit family. As to quaternary structure, NDH is composed of at least 16 different subunits, 5 of which are encoded in the nucleus. [4Fe-4S] cluster is required as a cofactor.

The protein resides in the plastid. It localises to the chloroplast thylakoid membrane. It catalyses the reaction a plastoquinone + NADH + (n+1) H(+)(in) = a plastoquinol + NAD(+) + n H(+)(out). The catalysed reaction is a plastoquinone + NADPH + (n+1) H(+)(in) = a plastoquinol + NADP(+) + n H(+)(out). Functionally, NDH shuttles electrons from NAD(P)H:plastoquinone, via FMN and iron-sulfur (Fe-S) centers, to quinones in the photosynthetic chain and possibly in a chloroplast respiratory chain. The immediate electron acceptor for the enzyme in this species is believed to be plastoquinone. Couples the redox reaction to proton translocation, and thus conserves the redox energy in a proton gradient. This is NAD(P)H-quinone oxidoreductase subunit I, chloroplastic from Lepidium virginicum (Virginia pepperweed).